Reading from the N-terminus, the 611-residue chain is Dihydroxy-acid dehydratase (611 aa).

Aspartate 82 contacts Mg(2+). Cysteine 123 contributes to the [2Fe-2S] cluster binding site. Mg(2+) is bound by residues aspartate 124 and lysine 125. An N6-carboxylysine modification is found at lysine 125. Residue cysteine 192 coordinates [2Fe-2S] cluster. Glutamate 489 contacts Mg(2+). Serine 515 serves as the catalytic Proton acceptor. Over residues 565-574 (ERRKAEEARG) the composition is skewed to basic and acidic residues. Positions 565 to 586 (ERRKAEEARGKKAFTPPTRQRE) are disordered.

It belongs to the IlvD/Edd family. As to quaternary structure, homodimer. Requires [2Fe-2S] cluster as cofactor. It depends on Mg(2+) as a cofactor.

The enzyme catalyses (2R)-2,3-dihydroxy-3-methylbutanoate = 3-methyl-2-oxobutanoate + H2O. It carries out the reaction (2R,3R)-2,3-dihydroxy-3-methylpentanoate = (S)-3-methyl-2-oxopentanoate + H2O. It functions in the pathway amino-acid biosynthesis; L-isoleucine biosynthesis; L-isoleucine from 2-oxobutanoate: step 3/4. Its pathway is amino-acid biosynthesis; L-valine biosynthesis; L-valine from pyruvate: step 3/4. Its function is as follows. Functions in the biosynthesis of branched-chain amino acids. Catalyzes the dehydration of (2R,3R)-2,3-dihydroxy-3-methylpentanoate (2,3-dihydroxy-3-methylvalerate) into 2-oxo-3-methylpentanoate (2-oxo-3-methylvalerate) and of (2R)-2,3-dihydroxy-3-methylbutanoate (2,3-dihydroxyisovalerate) into 2-oxo-3-methylbutanoate (2-oxoisovalerate), the penultimate precursor to L-isoleucine and L-valine, respectively. The chain is Dihydroxy-acid dehydratase from Parabacteroides distasonis (strain ATCC 8503 / DSM 20701 / CIP 104284 / JCM 5825 / NCTC 11152).